We begin with the raw amino-acid sequence, 558 residues long: Aurovertin biosynthesis cluster transcription factor aurF (558 aa).

This sequence belongs to the POU transcription factor family. Class-3 subfamily.

Its subcellular location is the nucleus. Functionally, transcription factor that regulates the expression of the gene cluster that mediates the biosynthesis of aurovertins, fungal polyketides that exhibit potent inhibition of adenosine triphosphate synthase. The chain is Aurovertin biosynthesis cluster transcription factor aurF from Calcarisporium arbuscula (Dendryphion arbuscula).